Reading from the N-terminus, the 217-residue chain is Protein GrpE (217 aa).

The protein belongs to the GrpE family. Homodimer.

It localises to the cytoplasm. In terms of biological role, participates actively in the response to hyperosmotic and heat shock by preventing the aggregation of stress-denatured proteins, in association with DnaK and GrpE. It is the nucleotide exchange factor for DnaK and may function as a thermosensor. Unfolded proteins bind initially to DnaJ; upon interaction with the DnaJ-bound protein, DnaK hydrolyzes its bound ATP, resulting in the formation of a stable complex. GrpE releases ADP from DnaK; ATP binding to DnaK triggers the release of the substrate protein, thus completing the reaction cycle. Several rounds of ATP-dependent interactions between DnaJ, DnaK and GrpE are required for fully efficient folding. The sequence is that of Protein GrpE from Mycoplasma pneumoniae (strain ATCC 29342 / M129 / Subtype 1) (Mycoplasmoides pneumoniae).